The sequence spans 446 residues: Exodeoxyribonuclease 7 large subunit (446 aa).

It belongs to the XseA family. As to quaternary structure, heterooligomer composed of large and small subunits.

It is found in the cytoplasm. It catalyses the reaction Exonucleolytic cleavage in either 5'- to 3'- or 3'- to 5'-direction to yield nucleoside 5'-phosphates.. Its function is as follows. Bidirectionally degrades single-stranded DNA into large acid-insoluble oligonucleotides, which are then degraded further into small acid-soluble oligonucleotides. This is Exodeoxyribonuclease 7 large subunit from Streptococcus thermophilus (strain ATCC BAA-250 / LMG 18311).